The chain runs to 463 residues: Oxidoreductase OXR1 (463 aa).

6-hydroxy-FAD is bound by residues 59–63 (GGSYS), Val-154, and Asp-366.

Belongs to the FAD-dependent oxidoreductase family. It depends on 6-hydroxy-FAD as a cofactor.

The protein operates within siderophore biosynthesis. Its function is as follows. Oxidoreductase; part of the gene cluster that mediates the biosynthesis of hydroxamate-containing siderophores that play a critical role in virulence via intracellular iron acquisition during macrophage infection. This is Oxidoreductase OXR1 from Ajellomyces capsulatus (Darling's disease fungus).